The chain runs to 81 residues: Sulfur carrier protein TusA (81 aa).

Cys19 serves as the catalytic Cysteine persulfide intermediate.

It belongs to the sulfur carrier protein TusA family.

It is found in the cytoplasm. Sulfur carrier protein which probably makes part of a sulfur-relay system. This Shewanella woodyi (strain ATCC 51908 / MS32) protein is Sulfur carrier protein TusA.